The sequence spans 638 residues: 1-deoxy-D-xylulose-5-phosphate synthase (638 aa).

Residues His75 and 116–118 (AHS) each bind thiamine diphosphate. Asp147 provides a ligand contact to Mg(2+). Thiamine diphosphate contacts are provided by residues 148–149 (GA), Asn177, Tyr288, and Glu370. Asn177 lines the Mg(2+) pocket.

Belongs to the transketolase family. DXPS subfamily. In terms of assembly, homodimer. It depends on Mg(2+) as a cofactor. Thiamine diphosphate serves as cofactor.

It carries out the reaction D-glyceraldehyde 3-phosphate + pyruvate + H(+) = 1-deoxy-D-xylulose 5-phosphate + CO2. It functions in the pathway metabolic intermediate biosynthesis; 1-deoxy-D-xylulose 5-phosphate biosynthesis; 1-deoxy-D-xylulose 5-phosphate from D-glyceraldehyde 3-phosphate and pyruvate: step 1/1. Its function is as follows. Catalyzes the acyloin condensation reaction between C atoms 2 and 3 of pyruvate and glyceraldehyde 3-phosphate to yield 1-deoxy-D-xylulose-5-phosphate (DXP). The chain is 1-deoxy-D-xylulose-5-phosphate synthase from Cupriavidus pinatubonensis (strain JMP 134 / LMG 1197) (Cupriavidus necator (strain JMP 134)).